The chain runs to 1215 residues: von Willebrand factor A domain-containing protein 5B1 (1215 aa).

Residues 1–18 form the signal peptide; sequence MPGLLNCLTGAALPLMES. Residues 19–141 form the VIT domain; it reads DVTSYVSGYA…NVTVFISTSS (123 aa). Residue N132 is glycosylated (N-linked (GlcNAc...) asparagine). The VWFA domain maps to 353–532; sequence EFIFLIDRSN…KAMAPVLSDV (180 aa). The tract at residues 595–674 is disordered; that stretch reads SVFYPSQDEG…DPTGTARRYP (80 aa). Polar residues-rich tracts occupy residues 608-621 and 646-667; these read GSGNCAKNVNQGQT and YSTNQISSHKTCPRATTASDPT. Y879 is subject to Phosphotyrosine. 3 disordered regions span residues 934 to 953, 964 to 999, and 1100 to 1121; these read GSSAGLGRPQSMLREHSSAA, QDSPTSTFNKTPSPGHEKQTTAEGPPQNLSASAPSS, and SPQDCTSLSSSPPSCDGISLKS. Polar residues-rich tracts occupy residues 964-975, 990-999, and 1100-1112; these read QDSPTSTFNKTP, QNLSASAPSS, and SPQDCTSLSSSPP.

The protein localises to the secreted. This chain is von Willebrand factor A domain-containing protein 5B1 (Vwa5b1), found in Mus musculus (Mouse).